We begin with the raw amino-acid sequence, 213 residues long: Phosphatidylserine decarboxylase proenzyme (213 aa).

The Schiff-base intermediate with substrate; via pyruvic acid role is filled by Ser-182. Residue Ser-182 is modified to Pyruvic acid (Ser); by autocatalysis.

Belongs to the phosphatidylserine decarboxylase family. PSD-A subfamily. As to quaternary structure, heterodimer of a large membrane-associated beta subunit and a small pyruvoyl-containing alpha subunit. Pyruvate is required as a cofactor. Is synthesized initially as an inactive proenzyme. Formation of the active enzyme involves a self-maturation process in which the active site pyruvoyl group is generated from an internal serine residue via an autocatalytic post-translational modification. Two non-identical subunits are generated from the proenzyme in this reaction, and the pyruvate is formed at the N-terminus of the alpha chain, which is derived from the carboxyl end of the proenzyme. The post-translation cleavage follows an unusual pathway, termed non-hydrolytic serinolysis, in which the side chain hydroxyl group of the serine supplies its oxygen atom to form the C-terminus of the beta chain, while the remainder of the serine residue undergoes an oxidative deamination to produce ammonia and the pyruvoyl prosthetic group on the alpha chain.

The protein resides in the cell membrane. The catalysed reaction is a 1,2-diacyl-sn-glycero-3-phospho-L-serine + H(+) = a 1,2-diacyl-sn-glycero-3-phosphoethanolamine + CO2. It participates in phospholipid metabolism; phosphatidylethanolamine biosynthesis; phosphatidylethanolamine from CDP-diacylglycerol: step 2/2. In terms of biological role, catalyzes the formation of phosphatidylethanolamine (PtdEtn) from phosphatidylserine (PtdSer). This is Phosphatidylserine decarboxylase proenzyme from Geotalea uraniireducens (strain Rf4) (Geobacter uraniireducens).